The sequence spans 504 residues: Anaerobic nitric oxide reductase transcription regulator NorR (504 aa).

4-aspartylphosphate is present on aspartate 57. Residues 187–416 (MIGLSPGMMQ…LEHAIHRAVV (230 aa)) enclose the Sigma-54 factor interaction domain. ATP-binding positions include 215 to 222 (GETGTGKE) and 278 to 287 (ADNGTLFLDE). Residues 479-498 (WAACARALEMDVANLHRLAK) constitute a DNA-binding region (H-T-H motif).

Its pathway is nitrogen metabolism; nitric oxide reduction. Functionally, required for the expression of anaerobic nitric oxide (NO) reductase, acts as a transcriptional activator for at least the norVW operon. Activation also requires sigma-54. The sequence is that of Anaerobic nitric oxide reductase transcription regulator NorR from Enterobacter sp. (strain 638).